Consider the following 185-residue polypeptide: Ribosome hibernation promotion factor (185 aa).

A probably still associates with ribosome region spans residues 1-125 (MIKFNIRGEN…PLDTTDEVAE (125 aa)). A required but not sufficient to restore ribosome dimerization, in vitro will replace E.coli RMF in ribosome dimerization region spans residues 126-185 (DHVDIVRTKHVALKPMDAEEAVLQMDMLGHDFYVFTDADSNGTHVVYRRTDGRYGLIETE).

It belongs to the HPF/YfiA ribosome-associated protein family. Long HPF subfamily. In terms of assembly, interacts with 100S ribosomes in stationary phase; alters the relative position of the 30S and 50S subunits.

The protein localises to the cytoplasm. Required for dimerization of active 70S ribosomes into 100S ribosomes in stationary phase; 100S ribosomes are translationally inactive and sometimes present during exponential growth. Able to dimerize E.coli 70S ribosomes in vitro. In Lactococcus lactis subsp. cremoris (strain MG1363), this protein is Ribosome hibernation promotion factor.